Consider the following 450-residue polypeptide: tRNA modification GTPase MnmE (450 aa).

(6S)-5-formyl-5,6,7,8-tetrahydrofolate contacts are provided by arginine 23, glutamate 79, and lysine 118. In terms of domain architecture, TrmE-type G spans glycine 214–glycine 374. K(+) is bound at residue asparagine 224. GTP contacts are provided by residues asparagine 224–serine 229, threonine 243–threonine 249, and aspartate 268–glycine 271. Serine 228 contacts Mg(2+). Residues threonine 243, isoleucine 245, and threonine 248 each coordinate K(+). Residue threonine 249 coordinates Mg(2+). Residue lysine 450 coordinates (6S)-5-formyl-5,6,7,8-tetrahydrofolate.

The protein belongs to the TRAFAC class TrmE-Era-EngA-EngB-Septin-like GTPase superfamily. TrmE GTPase family. As to quaternary structure, homodimer. Heterotetramer of two MnmE and two MnmG subunits. K(+) serves as cofactor.

The protein localises to the cytoplasm. Functionally, exhibits a very high intrinsic GTPase hydrolysis rate. Involved in the addition of a carboxymethylaminomethyl (cmnm) group at the wobble position (U34) of certain tRNAs, forming tRNA-cmnm(5)s(2)U34. In Francisella tularensis subsp. novicida (strain U112), this protein is tRNA modification GTPase MnmE.